A 600-amino-acid polypeptide reads, in one-letter code: PWWP domain-containing protein 2B (600 aa).

Disordered regions lie at residues 81-115 (ETGP…PVPA), 143-171 (WVPQ…LILS), 186-350 (KSTV…LGDG), 366-408 (GCPR…PQGK), and 426-477 (DCTS…TVPP). The span at 104-115 (EPPPPLIPPVPA) shows a compositional bias: pro residues. Positions 151–160 (TIKRTRRRLS) are enriched in basic residues. Residues 187–200 (STVSPQEASPSPLN) are compositionally biased toward polar residues. Ser-190 and Ser-210 each carry phosphoserine. The span at 239–252 (EKREEDRVAGERVP) shows a compositional bias: basic and acidic residues. The residue at position 254 (Ser-254) is a Phosphoserine. Residues 286-297 (PQQSLQNGSQDS) are compositionally biased toward polar residues. Residues 298 to 309 (EVSRDVEPRGGG) show a composition bias toward basic and acidic residues. Pro residues predominate over residues 328–339 (PVPPISDLPPPK). The span at 381-395 (DGSSHGLEDLSSGSS) shows a compositional bias: low complexity. The segment covering 443-456 (SSGSEVTSPDTGDL) has biased composition (polar residues). Ser-457 is subject to Phosphoserine. A compositionally biased stretch (low complexity) spans 457–468 (SSGDSASVPSSS). A PWWP domain is found at 500 to 560 (VGDIVWGKIH…ISKLSPFSEF (61 aa)).

As to quaternary structure, component of a MTA1-specific subcomplex of the NuRD complex composed of PWWP2B, MTA1 and HDAC1 but does not contain CHD4 and MBD3. Interacts with MTA1, MTA2, MTA3, HDAC1, HDAC2, RBBP4, RBBP7, BRCC3 and ZNF516. Does not interact with CHD4 and MBD3. Deubiquitinated by BRCC3; leading to its stabilization. In terms of tissue distribution, expressed in the brown adipose tissue.

The protein resides in the nucleus. Functionally, chromatin-binding protein that acts as an adapter between distinct nucleosome components (H3K36me3 or H2A.Z) and chromatin-modifying complexes, contributing to the regulation of the levels of histone acetylation at actively transcribed genes. Competes with CHD4 and MBD3 for interaction with MTA1 to form a NuRD subcomplex, preventing the formation of full NuRD complex (containing CHD4 and MBD3), leading to recruitment of HDACs to gene promoters resulting in turn in the deacetylation of nearby H3K27 and H2A.Z. Plays a role in facilitating transcriptional elongation through regulation of histone acetylation. Negatively regulates brown adipocyte thermogenesis by interacting with and stabilizing HDAC1 at the UCP1 gene promoter, thereby promoting histone deacetylation at the promoter leading to the repression of UCP1 expression. The sequence is that of PWWP domain-containing protein 2B (Pwwp2b) from Mus musculus (Mouse).